The chain runs to 201 residues: Pyridoxal 5'-phosphate synthase subunit PdxT (201 aa).

Position 51 to 53 (51 to 53) interacts with L-glutamine; sequence GES. The Nucleophile role is filled by cysteine 83. L-glutamine is bound by residues arginine 112 and 141-142; that span reads IR. Residues histidine 182 and glutamate 184 each act as charge relay system in the active site.

This sequence belongs to the glutaminase PdxT/SNO family. As to quaternary structure, in the presence of PdxS, forms a dodecamer of heterodimers. Only shows activity in the heterodimer.

It catalyses the reaction aldehydo-D-ribose 5-phosphate + D-glyceraldehyde 3-phosphate + L-glutamine = pyridoxal 5'-phosphate + L-glutamate + phosphate + 3 H2O + H(+). It carries out the reaction L-glutamine + H2O = L-glutamate + NH4(+). Its pathway is cofactor biosynthesis; pyridoxal 5'-phosphate biosynthesis. Catalyzes the hydrolysis of glutamine to glutamate and ammonia as part of the biosynthesis of pyridoxal 5'-phosphate. The resulting ammonia molecule is channeled to the active site of PdxS. The chain is Pyridoxal 5'-phosphate synthase subunit PdxT from Thermobifida fusca (strain YX).